A 1852-amino-acid polypeptide reads, in one-letter code: Dihydropyridine-sensitive L-type skeletal muscle calcium channel subunit alpha-1 (1852 aa).

The Cytoplasmic portion of the chain corresponds to 1–70; the sequence is MESGSGGGGG…KTCINIVEWK (70 aa). One copy of the I repeat lies at 57–354; it reads NPFRKTCINI…LVLGALSGEF (298 aa). The helical transmembrane segment at 71–86 threads the bilayer; the sequence is PFEIIILLTIFANCVA. The Extracellular portion of the chain corresponds to 87 to 107; it reads LAVFLPMPEEDTNNTNLTLES. 2 N-linked (GlcNAc...) asparagine glycosylation sites follow: asparagine 99 and asparagine 102. A helical membrane pass occupies residues 108 to 127; that stretch reads LEYIFLVIFTLECFLKIVAY. Residues 128–139 are Cytoplasmic-facing; sequence GLLFHEGAYLRN. The helical transmembrane segment at 140–155 threads the bilayer; sequence CWNILDFVIVFMGLFT. The Extracellular portion of the chain corresponds to 156–176; the sequence is LVVDTINTIAGVPTEKGGGFD. Residues 177-195 form a helical membrane-spanning segment; the sequence is MKALRAFRVLRPLRLVSGV. Residues 196-214 lie on the Cytoplasmic side of the membrane; it reads PSLQVVMSSILKSMLPLFH. Residues 215 to 234 traverse the membrane as a helical segment; it reads IALLVFFMVHIYAIMGLELF. Residues 235 to 326 are Extracellular-facing; sequence KCKMHKTCYY…WINDAMGNDW (92 aa). N-linked (GlcNAc...) asparagine glycosylation is present at asparagine 274. A helical transmembrane segment spans residues 327–351; it reads PWIYFLTLILVGSFFILNLVLGALS. The Cytoplasmic segment spans residues 352-447; sequence GEFTKEREES…RKCHVWVKSK (96 aa). The tract at residues 374-391 is binding to the beta subunit; that stretch reads QQMDEDLEGYMEWITHAE. An II repeat occupies 433–679; that stretch reads NVVLRRKCHV…VFLAIAVDNL (247 aa). Residues 448 to 466 form a helical membrane-spanning segment; sequence FFNWWVLLVVLLNTLVIAM. Topologically, residues 467–481 are extracellular; that stretch reads EHHNQTEGLTSFQDT. Residue asparagine 470 is glycosylated (N-linked (GlcNAc...) asparagine). The chain crosses the membrane as a helical span at residues 482 to 501; sequence ANVILLACFTIEMVMKMYAF. Residues 502–509 are Cytoplasmic-facing; the sequence is GPRAYFMS. Residues 510-528 form a helical membrane-spanning segment; sequence IFNRFDCFVVTIGILEIIL. At 529–538 the chain is on the extracellular side; it reads VVSNIMTPLG. Residues 539 to 557 form a helical membrane-spanning segment; that stretch reads ISVMRCIRLLRLFKLTRYW. Residues 558–576 are Cytoplasmic-facing; it reads TSLNNLVASLLNSVKSIAS. A helical membrane pass occupies residues 577–596; the sequence is LLLLLFLFIVIFALLGMQVF. At 597–651 the chain is on the extracellular side; it reads GGKFNFPDRVIQRSNFDNFPQALISVFQVLTGEEWDSIMYNGIMAHGGPQSPGIL. Residues 652 to 675 form a helical membrane-spanning segment; that stretch reads VSIYFIILYVCGNFVLLNVFLAIA. The Cytoplasmic portion of the chain corresponds to 676–815; that stretch reads VDNLAEAESL…KLCHRIVNHT (140 aa). An III repeat occupies 802 to 1084; sequence HKFRKLCHRI…IFVGFVIVTF (283 aa). Residues 816–834 form a helical membrane-spanning segment; sequence TFTNIILLFILLSSISLAA. Over 835 to 850 the chain is Extracellular; sequence EDPIDPRSFRNKVLAY. Residues 851-870 form a helical membrane-spanning segment; that stretch reads ADIVFTTVFTIEIVLKMTVY. Over 871 to 882 the chain is Cytoplasmic; that stretch reads GAFLHTGSFCRN. Residues 883-901 traverse the membrane as a helical segment; the sequence is SFNILDLIVVGVSLLSMGM. Topologically, residues 902 to 908 are extracellular; sequence ESSTISV. Residues 909–927 form a helical membrane-spanning segment; sequence VKILRVLRVLRPLRAINRA. Topologically, residues 928–946 are cytoplasmic; it reads KGLKHVVQCMFVAIKTIGN. Residues 947–966 form a helical membrane-spanning segment; that stretch reads IVLVTMLLDFMFACIGVQLF. The Extracellular portion of the chain corresponds to 967–1056; that stretch reads KGKLYYCTDP…TGPLYNNRVG (90 aa). The interval 1004 to 1093 is dihydropyridine binding; the sequence is RMWVNSDFNF…FQKQGEQEYK (90 aa). The helical transmembrane segment at 1057–1081 threads the bilayer; that stretch reads ISIFFIIYIIIIAFFMMNIFVGFVI. Topologically, residues 1082–1134 are cytoplasmic; sequence VTFQKQGEQEYKDCELDKNQRQCVQYALKARPLKCYIPKNPHQYRVWYFVTSC. The IV repeat unit spans residues 1121 to 1405; that stretch reads NPHQYRVWYF…LFVAIIMDNV (285 aa). The chain crosses the membrane as a helical span at residues 1135–1153; it reads YFEYLMFFLIMLNTLCLGI. Residues 1154–1168 are Extracellular-facing; that stretch reads QHCNQSDHITKLSDT. Residue asparagine 1157 is glycosylated (N-linked (GlcNAc...) asparagine). A helical membrane pass occupies residues 1169 to 1188; sequence LNLIFTVLFTGEMIVKLIAF. At 1189–1196 the chain is on the cytoplasmic side; the sequence is KAKGYFGD. The chain crosses the membrane as a helical span at residues 1197–1215; the sequence is PWNVFDFIIVVGSIVDVVL. Residues 1216 to 1252 are Extracellular-facing; sequence SEVDAALEARGGLWCLHGCAEVNPMQAIAEAENVRVS. The helical transmembrane segment at 1253 to 1271 threads the bilayer; that stretch reads ITFFRLFRVLRLIKLLNRS. Residues 1272-1290 lie on the Cytoplasmic side of the membrane; that stretch reads EGIRNLLWTFIKSFQALPH. Residues 1291–1310 form a helical membrane-spanning segment; it reads VGLLIVMLFFIYAVIGMQMF. Residues 1311 to 1377 lie on the Extracellular side of the membrane; the sequence is GKVALVDGTE…GEEYTCGSSI (67 aa). The tract at residues 1358-1424 is dihydropyridine binding; the sequence is LCDAKSDYGP…LGPHHLDEFK (67 aa). Positions 1370 to 1413 are phenylalkylamine binding; the sequence is EYTCGSSIAVFYFLSFYILCAFLIINLFVAIIMDNVDYLTRDWS. A helical membrane pass occupies residues 1378–1402; that stretch reads AVFYFLSFYILCAFLIINLFVAIIM. Residues 1403-1852 lie on the Cytoplasmic side of the membrane; sequence DNVDYLTRDW…TKPKENTSAV (450 aa). Positions 1418–1453 constitute an EF-hand domain; the sequence is HHLDEFKKIWAEYDPEATGRIKHLDVVTLLRRIQPP. Ca(2+) is bound by residues aspartate 1431, glutamate 1433, threonine 1435, arginine 1437, and aspartate 1442. Residues 1820–1852 are disordered; sequence NRQSGKVTKRKRRPIPVPPGTKSTKPKENTSAV.

The protein belongs to the calcium channel alpha-1 subunit (TC 1.A.1.11) family. As to quaternary structure, multisubunit complex consisting of alpha-1, alpha-2, beta and delta subunits in a 1:1:1:1 ratio. The channel activity is directed by the pore-forming and voltage-sensitive alpha-1 subunit. In many cases, this subunit is sufficient to generate voltage-sensitive calcium channel activity. The auxiliary subunits beta and alpha-2/delta linked by a disulfide bridge regulate the channel activity. An additional gamma subunit is present only in skeletal muscle L-type channel. Post-translationally, may be non-phosphorylated. As to expression, skeletal muscle.

It localises to the membrane. Its function is as follows. Voltage-sensitive calcium channels (VSCC) mediate the entry of calcium ions into excitable cells and are also involved in a variety of calcium-dependent processes, including muscle contraction, gene expression, cell motility, cell division and cell death. The isoform alpha-1S gives rise to L-type calcium currents. Long-lasting (L-type) calcium channels belong to the 'high-voltage activated' (HVA) group. They are blocked by dihydropyridines (DHP), phenylalkylamines, and by benzothiazepines. Calcium channels containing the alpha-1S subunit play an important role in excitation-contraction coupling in skeletal muscle. This is Dihydropyridine-sensitive L-type skeletal muscle calcium channel subunit alpha-1 from Cyprinus carpio (Common carp).